Reading from the N-terminus, the 185-residue chain is Ribosome-recycling factor (185 aa).

This sequence belongs to the RRF family.

It is found in the cytoplasm. Responsible for the release of ribosomes from messenger RNA at the termination of protein biosynthesis. May increase the efficiency of translation by recycling ribosomes from one round of translation to another. The chain is Ribosome-recycling factor from Bacillus cereus (strain B4264).